The primary structure comprises 1047 residues: MGNIESVDGQSEMKHHIMPLKVPMPDPTELEERFAIVLNSMNLPPDKARLLRQYDNEKKWDLICDQERFQVKNPPHTYIQKLRGYLDPKVTRKKFRRRVQESTKVLRELEISLRTNHIGWVREFLNDENRGLDILVEYLSFAQCAVMLDFEGLENGEDFSLDKAKSWSRSIEDLHQNGCNTLVRSARQSVLRYGSTSNSKTIKNSRLVSQKDDVHVCIMCLRAIMNYQYGFNLVMSHAHAVNEIALSLNNKNPRTKALVLELLAAVCLVRGGHEIILSAFDNFKEVCKEKHRFEKLMEYFRSEDGNIDFMVACMQFINIVVHSVEDMNFRVHLQYEFTKLGLDDFLEKSKHTESDKLSVQIQAYLDNVFDVGGLLEDAETKNVALEKVEELEEHLSHVTEKLLDVENETMTKVADLEKQLLHKDKELAVIKETYESASTQVHTLRRMIQEKDAAFQRHNNIEKQLLELEQQGTIRLRKQPDGDIAIETLGAGAVAGTPLTDLRSLTVGMSTIGGLGGTSAVPVEAVAPPPPPPPPPPPPPPAPPLPSEVESIPIPPPPPPPLPGPSPSVILSVGLSAIRIKKPIKTKFRLPVFNWTALKPNQINGTVFNEIDDDRVLEELDLEKFEELFKTKAQGPVVDLSCSKSKVSQKVINKVQLLDANRSKNLAITLRKANKTTEEICKAIQTFDLKALPVDFVECLMRFLPTEAESKLLRQYERERRPLDQLAEEDRFMLLFSKIERLTQRMSIITFVGNFNDNVNMLTPQLNAIIAASASVKSSPKLKKILEIILALGNYMNSSKRGSVYGFKLQSLDLLLDTKSTDRKMTLLHYIALVVKEKYPELANFYNELHFVDKAAAVSLENVLLDVKELGKGMDLVRRECSLHDHAVLKGFAQTSDTQLDKLAKDAKTAEEAFNNVVLYFGESPKTTPPSVFFPVFVRFIRAYKEAVEENEQRKKQEEAMREKLLAQEAKQHDPKVQAQKKRHQQQELIAELRRRQAKDHRPVYEGKDGTIEDIITVLKSVPFTARTAKRGSRFFCDANLFDESIC.

A lipid anchor (N-myristoyl glycine) is attached at G2. A GBD/FH3 domain is found at 22–462 (VPMPDPTELE…AAFQRHNNIE (441 aa)). Residues 520–561 (AVPVEAVAPPPPPPPPPPPPPPAPPLPSEVESIPIPPPPPPP) are disordered. Residues 527-546 (APPPPPPPPPPPPPPAPPLP) show a composition bias toward pro residues. The region spanning 580 to 970 (IKKPIKTKFR…MREKLLAQEA (391 aa)) is the FH2 domain. The DAD domain occupies 1000–1037 (DHRPVYEGKDGTIEDIITVLKSVPFTARTAKRGSRFFC).

This sequence belongs to the formin homology family.

It is found in the cytoplasm. Its subcellular location is the cell membrane. Functionally, required for developmental angiogenesis, but not for vasculogenesis. This is Formin-like protein 3 (fmnl3) from Danio rerio (Zebrafish).